We begin with the raw amino-acid sequence, 1254 residues long: Structural polyprotein (1254 aa).

Residues 1–33 (MFPYQPMYPMQPMPFRNPFAAPRRPWFPRTDPF) are necessary for nucleocapsid assembly and virus assembly. The tract at residues 33–68 (FLAMQVQELARSMANLTFKQRRDVPPEGPPAKKKKK) is host transcription inhibition. The short motif at 41-48 (LARSMANL) is the Supraphysiological nuclear export signal element. The interval 48–119 (LTFKQRRDVP…KPGKRQRMVM (72 aa)) is disordered. Positions 64–68 (KKKKK) match the Nuclear localization signal motif. Basic residues-rich tracts occupy residues 79–93 (NGKK…KKKT) and 102–117 (GGKK…RQRM). The segment at 91–126 (KKTGPPPQKTNGGKKKVNKKPGKRQRMVMKLESDKT) is binding to the viral RNA. Position 93 is a phosphothreonine (T93). The interval 111–125 (PGKRQRMVMKLESDK) is ribosome-binding. Residue S123 is modified to Phosphoserine. The 150-residue stretch at 125–274 (KTFPIMLDGR…KYTPENSEQW (150 aa)) folds into the Peptidase S3 domain. T126 is modified (phosphothreonine). Catalysis depends on H151, which acts as the Charge relay system. The interaction with spike glycoprotein E2 stretch occupies residues 167-172 (KKASKY). Catalysis depends on charge relay system residues D173 and S225. Residues 259–263 (EKGVT) form an interaction with spike glycoprotein E2 region. A functions as an uncleaved signal peptide for the precursor of protein E3/E2 region spans residues 275-286 (SLVTTMCLLANV). Over 275–700 (SLVTTMCLLA…HYYHRYPMST (426 aa)) the chain is Extracellular. 7 disulfide bridges follow: C281–C290, C352–C456, C355–C360, C423–C437, C484–C599, C533–C559, and C535–C553. N285 carries an N-linked (GlcNAc...) asparagine; by host glycan. The N-linked (GlcNAc...) asparagine; by host glycan is linked to N651. The chain crosses the membrane as a helical span at residues 701–721 (ILGLSICAAIVTTSIAASVWL). Over 722 to 756 (FCKSRISCLTPYRLTPNARMPLCLAVLCCARTARA) the chain is Cytoplasmic. An interaction with the capsid protein region spans residues 724–728 (KSRIS). S-palmitoyl cysteine; by host attachment occurs at residues C729, C749, and C750. Residues 729-749 (CLTPYRLTPNARMPLCLAVLC) form a transient transmembrane before p62-6K protein processing region. Residues C729 and C750 are joined by a disulfide bond. The Extracellular segment spans residues 757–771 (ETTWESLDHLWNHNQ). The next 2 membrane-spanning stretches (helical) occupy residues 772-790 (QMFW…VATR) and 791-811 (LLKC…VGAG). Topologically, residues 812–1224 (AYEHATTMPN…SKTAWTWLTS (413 aa)) are extracellular. 4 disulfides stabilise this stretch: C861-C926, C874-C906, C875-C908, and C880-C890. The E1 fusion peptide loop stretch occupies residues 896 to 913 (VYPFMWGGAYCFCDTENT). 2 N-linked (GlcNAc...) asparagine; by host glycosylation sites follow: N946 and N1082. Cystine bridges form between C1071–C1083, C1113–C1188, C1118–C1192, and C1140–C1182. The chain crosses the membrane as a helical span at residues 1225–1245 (LLGGSAIIIIIGLVLATIVAM). At 1246–1254 (YVLTNQKHN) the chain is on the cytoplasmic side.

In terms of assembly, homodimer. Homomultimer. Interacts with host karyopherin KPNA4; this interaction allows the nuclear import of the viral capsid protein. Interacts with spike glycoprotein E2. Interacts with host IRAK1; the interaction leads to inhibition of IRAK1-dependent signaling. Part of a tetrameric complex composed of host CRM1, host importin alpha/beta dimer and the viral capsid; this complex blocks the receptor-mediated transport through the nuclear pore. Interacts with host phosphatase PPP1CA; this interaction dephosphorylates the capsid protein, which increases its ability to bind to the viral genome. The precursor of protein E3/E2 and E1 form a heterodimer shortly after synthesis. As to quaternary structure, interacts with spike glycoprotein E2. The precursor of protein E3/E2 and E1 form a heterodimer shortly after synthesis. Processing of the precursor of protein E3/E2 into E2 and E3 results in a heterodimer of the spike glycoproteins E2 and E1. Spike at virion surface are constituted of three E2-E1 heterodimers. After target cell attachment and endocytosis, E1 change conformation to form homotrimers. Interacts with 6K protein. Interacts with host LDLRAD3; this interaction mediates viral entry to the host cell. In terms of assembly, interacts with spike glycoprotein E1. Processing of the precursor of protein E3/E2 into E2 and E3 results in a heterodimer of the spike glycoproteins E2 and E1. Spike at virion surface are constituted of a trimer of E2-E1 heterodimers. Interacts with 6K protein. Interacts with host LDLRAD3; this interaction mediates viral entry to the host cell. Oligomer. Interacts with spike glycoprotein E1. Interacts with spike glycoprotein E2. Post-translationally, structural polyprotein: Specific enzymatic cleavages in vivo yield mature proteins. Capsid protein is auto-cleaved during polyprotein translation, unmasking a signal peptide at the N-terminus of the precursor of E3/E2. The remaining polyprotein is then targeted to the host endoplasmic reticulum, where host signal peptidase cleaves it into pE2, 6K and E1 proteins. pE2 is further processed to mature E3 and E2 by host furin in trans-Golgi vesicle. In terms of processing, phosphorylated on serine and threonine residues. Palmitoylated via thioester bonds. These palmitoylations may induce disruption of the C-terminus transmembrane. This would result in the reorientation of E2 C-terminus from lumenal to cytoplasmic side. Post-translationally, N-glycosylated. In terms of processing, palmitoylated via thioester bonds.

The protein localises to the virion. Its subcellular location is the host cytoplasm. It is found in the host cell membrane. It localises to the host nucleus. The protein resides in the virion membrane. The protein localises to the host Golgi apparatus. Its subcellular location is the host trans-Golgi network. It is found in the host endoplasmic reticulum. The enzyme catalyses Autocatalytic release of the core protein from the N-terminus of the togavirus structural polyprotein by hydrolysis of a -Trp-|-Ser- bond.. In terms of biological role, forms an icosahedral capsid with a T=4 symmetry composed of 240 copies of the capsid protein surrounded by a lipid membrane through which penetrate 80 spikes composed of trimers of E1-E2 heterodimers. The capsid protein binds to the viral RNA genome at a site adjacent to a ribosome binding site for viral genome translation following genome release. Possesses a protease activity that results in its autocatalytic cleavage from the nascent structural protein. Following its self-cleavage, the capsid protein transiently associates with ribosomes, and within several minutes the protein binds to viral RNA and rapidly assembles into icosahedric core particles. The resulting nucleocapsid eventually associates with the cytoplasmic domain of the spike glycoprotein E2 at the cell membrane, leading to budding and formation of mature virions. In case of infection, new virions attach to target cells and after clathrin-mediated endocytosis their membrane fuses with the host endosomal membrane. This leads to the release of the nucleocapsid into the cytoplasm, followed by an uncoating event necessary for the genomic RNA to become accessible. The uncoating might be triggered by the interaction of capsid proteins with ribosomes. Binding of ribosomes would release the genomic RNA since the same region is genomic RNA-binding and ribosome-binding. Specifically inhibits interleukin-1 receptor-associated kinase 1/IRAK1-dependent signaling during viral entry, representing a means by which the alphaviruses may evade innate immune detection and activation prior to viral gene expression. Inhibits host transcription. Forms a tetrameric complex with XPO1/CRM1 and the nuclear import receptor importin. This complex blocks the central channel of host nuclear pores thereby inhibiting the receptor-mediated nuclear transport and thus the host mRNA and rRNA transcription. The inhibition of transcription is linked to a cytopathic effect on the host cell. Its function is as follows. Provides the signal sequence for the translocation of the precursor of protein E3/E2 to the host endoplasmic reticulum. Furin-cleaved E3 remains associated with spike glycoprotein E1 and mediates pH protection of the latter during the transport via the secretory pathway. After virion release from the host cell, the assembly protein E3 is gradually released in the extracellular space. Functionally, plays a role in viral attachment to target host cell, by binding to the cell receptor LDLRAD3. Synthesized as a p62 precursor which is processed by furin at the cell membrane just before virion budding, giving rise to E2-E1 heterodimer. The p62-E1 heterodimer is stable, whereas E2-E1 is unstable and dissociate at low pH. p62 is processed at the last step, presumably to avoid E1 fusion activation before its final export to cell surface. E2 C-terminus contains a transitory transmembrane that would be disrupted by palmitoylation, resulting in reorientation of the C-terminal tail from lumenal to cytoplasmic side. This step is critical since E2 C-terminus is involved in budding by interacting with capsid proteins. This release of E2 C-terminus in cytoplasm occurs lately in protein export, and precludes premature assembly of particles at the endoplasmic reticulum membrane. Acts as a viroporin that participates in virus glycoprotein processing and transport to the plasma membrane, cell permeabilization and budding of viral particles. Disrupts the calcium homeostasis of the cell, probably at the endoplasmic reticulum level. This leads to cytoplasmic calcium elevation. Because of its lipophilic properties, the 6K protein is postulated to influence the selection of lipids that interact with the transmembrane domains of the glycoproteins, which, in turn, affects the deformability of the bilayer required for the extreme curvature that occurs as budding proceeds. Present in low amount in virions, about 3% compared to viral glycoproteins. In terms of biological role, class II viral fusion protein. Fusion activity is inactive as long as E1 is bound to E2 in mature virion. After virus attachment to cell receptor LDLRAD3 and endocytosis, acidification of the endosome induce dissociation of E1/E2 heterodimer and concomitant trimerization of the E1 subunits. This E1 trimer is fusion active, and promotes release of viral nucleocapsid in cytoplasm after endosome and viral membrane fusion. Efficient fusion requires the presence of cholesterol and sphingolipid in the target membrane. This Venezuelan equine encephalitis virus (strain Mena II) (VEEV) protein is Structural polyprotein.